The primary structure comprises 114 residues: uncharacterized protein (114 aa).

Possibly involved in pGI2 replication mechanism. This is an uncharacterized protein from Bacillus thuringiensis.